Reading from the N-terminus, the 55-residue chain is ATP synthase protein 8 (55 aa).

A helical membrane pass occupies residues 7-28 (ISWFFNFLLAWFFLFIVVTILL).

The protein belongs to the ATPase protein 8 family. In terms of assembly, F-type ATPases have 2 components, CF(1) - the catalytic core - and CF(0) - the membrane proton channel.

The protein localises to the mitochondrion membrane. In terms of biological role, mitochondrial membrane ATP synthase (F(1)F(0) ATP synthase or Complex V) produces ATP from ADP in the presence of a proton gradient across the membrane which is generated by electron transport complexes of the respiratory chain. F-type ATPases consist of two structural domains, F(1) - containing the extramembraneous catalytic core and F(0) - containing the membrane proton channel, linked together by a central stalk and a peripheral stalk. During catalysis, ATP synthesis in the catalytic domain of F(1) is coupled via a rotary mechanism of the central stalk subunits to proton translocation. Part of the complex F(0) domain. Minor subunit located with subunit a in the membrane. This is ATP synthase protein 8 (MT-ATP8) from Pisaster ochraceus (Ochre sea star).